We begin with the raw amino-acid sequence, 226 residues long: tRNA (guanine-N(7)-)-methyltransferase (226 aa).

The S-adenosyl-L-methionine site is built by Glu-59, Glu-84, Asp-111, and Asp-134. The active site involves Asp-134. Lys-138 provides a ligand contact to substrate. The tract at residues 140–145 (RHNKRR) is interaction with RNA. Substrate contacts are provided by residues Asp-170 and 205–208 (TKFE).

It belongs to the class I-like SAM-binding methyltransferase superfamily. TrmB family.

The catalysed reaction is guanosine(46) in tRNA + S-adenosyl-L-methionine = N(7)-methylguanosine(46) in tRNA + S-adenosyl-L-homocysteine. Its pathway is tRNA modification; N(7)-methylguanine-tRNA biosynthesis. Functionally, catalyzes the formation of N(7)-methylguanine at position 46 (m7G46) in tRNA. The polypeptide is tRNA (guanine-N(7)-)-methyltransferase (Chromobacterium violaceum (strain ATCC 12472 / DSM 30191 / JCM 1249 / CCUG 213 / NBRC 12614 / NCIMB 9131 / NCTC 9757 / MK)).